The following is a 286-amino-acid chain: MAGAKEIRSKIASIKSTQKITSAMEKVAVSKMRKAQMRMAASRPYAERIRQVIGHLANANPEYLHPFMIERPLKRVGYVVVSSDRGLCGGLNTNLFKTLVKDMAVNRENGVEIDLCVVGSKGAAFFRNFGGNVVAAISHLGEEPSINDLIGSVKVMLDAYLDGRIDRLSVVSNKFINTMTQQPTVEQLIPLVATPDQGLKHHWDYLYEPDAKELLDGLMVRYVESQVYQAVVENNAAEQAARMIAMKNATDNAGDLISDLQLIYNKARQAAITQEISEIVGGAAAV.

Belongs to the ATPase gamma chain family. F-type ATPases have 2 components, CF(1) - the catalytic core - and CF(0) - the membrane proton channel. CF(1) has five subunits: alpha(3), beta(3), gamma(1), delta(1), epsilon(1). CF(0) has three main subunits: a, b and c.

The protein localises to the cell inner membrane. In terms of biological role, produces ATP from ADP in the presence of a proton gradient across the membrane. The gamma chain is believed to be important in regulating ATPase activity and the flow of protons through the CF(0) complex. In Pseudomonas syringae pv. tomato (strain ATCC BAA-871 / DC3000), this protein is ATP synthase gamma chain.